We begin with the raw amino-acid sequence, 138 residues long: Vesicle transport protein GOT1B (138 aa).

Position 1 is an N-acetylmethionine (Met1). Topologically, residues 1-9 (MISLTDTQK) are cytoplasmic. A helical membrane pass occupies residues 10 to 30 (IGMGLTGFGVFFLFFGMILFF). At 31-32 (DK) the chain is on the lumenal side. The chain crosses the membrane as a helical span at residues 33 to 53 (ALLAIGNVLFVAGLAFVIGLE). Topologically, residues 54 to 68 (RTFRFFFQRHKVKAT) are cytoplasmic. Residue Glu90 is a topological domain, lumenal. Residues 91–109 (IYGFFLLFRGFFPVVVGFI) form a helical membrane-spanning segment. Over 110–138 (RRVPVLGSLLNLPGIRSFVDKVGESNNMV) the chain is Cytoplasmic.

It belongs to the GOT1 family.

Its subcellular location is the golgi apparatus membrane. Its function is as follows. May be involved in fusion of ER-derived transport vesicles with the Golgi complex. The protein is Vesicle transport protein GOT1B (Golt1b) of Mus musculus (Mouse).